The chain runs to 121 residues: Protein 3.8 (121 aa).

This Escherichia phage T7 (Bacteriophage T7) protein is Protein 3.8.